The sequence spans 500 residues: Ferulic acid decarboxylase 1 (500 aa).

Positions 168, 191, and 233 each coordinate Mn(2+). Prenylated FMN is bound by residues 168-173 (NWSIAR), 190-191 (QH), and Glu233. The active-site Proton donor is Glu282. Lys391 is a binding site for prenylated FMN.

The protein belongs to the UbiD family. UbiD-like/FDC subfamily. Homodimer. May form higher order oligomers. The cofactor is Mn(2+). Prenylated FMN is required as a cofactor.

The protein resides in the cytoplasm. The catalysed reaction is (E)-4-coumarate + H(+) = 4-vinylphenol + CO2. The enzyme catalyses (E)-cinnamate + H(+) = styrene + CO2. It carries out the reaction (E)-ferulate + H(+) = 2-methoxy-4-vinylphenol + CO2. Catalyzes the reversible decarboxylation of aromatic carboxylic acids like ferulic acid, p-coumaric acid or cinnamic acid, producing the corresponding vinyl derivatives 4-vinylphenol, 4-vinylguaiacol, and styrene, respectively, which play the role of aroma metabolites. This is Ferulic acid decarboxylase 1 from Aspergillus niger (strain ATCC MYA-4892 / CBS 513.88 / FGSC A1513).